Consider the following 125-residue polypeptide: 14 kDa phosphohistidine phosphatase (125 aa).

N-acetylalanine is present on alanine 2. Substrate is bound at residue lysine 21. Histidine 53 acts as the Proton acceptor in catalysis. Position 94–96 (94–96) interacts with substrate; that stretch reads SMG.

In terms of assembly, monomer.

It localises to the cytoplasm. It carries out the reaction N(pros)-phospho-L-histidyl-[protein] + H2O = L-histidyl-[protein] + phosphate. The catalysed reaction is N(tele)-phospho-L-histidyl-[protein] + H2O = L-histidyl-[protein] + phosphate. Functionally, exhibits phosphohistidine phosphatase activity. In terms of biological role, may have a significant involvement in neuronal signaling. This Oryctolagus cuniculus (Rabbit) protein is 14 kDa phosphohistidine phosphatase (PHPT1).